The primary structure comprises 361 residues: Probable sugar phosphate/phosphate translocator At1g12500 (361 aa).

An N-acetylvaline modification is found at Val-2. The next 9 membrane-spanning stretches (helical) occupy residues 56–76 (TILT…VLLL), 90–110 (IFLT…VINI), 125–145 (FLKI…GNTS), 153–173 (FNQA…FLIT), 192–212 (IVLA…ICVA), 240–260 (LLLY…LYIE), 276–296 (LIIF…LTNF), 306–326 (TLQV…VLIF), and 329–349 (PVTV…VLYS). One can recognise an EamA domain in the interval 89–196 (PIFLTMTHML…PVVSGIVLAS (108 aa)).

The protein belongs to the TPT transporter family. TPT (TC 2.A.7.9) subfamily.

The protein resides in the membrane. The sequence is that of Probable sugar phosphate/phosphate translocator At1g12500 from Arabidopsis thaliana (Mouse-ear cress).